A 360-amino-acid chain; its full sequence is DNA polymerase IV (360 aa).

The 182-residue stretch at 6–187 (IIHVDMDAFY…LKIGDLHGVG (182 aa)) folds into the UmuC domain. Residues aspartate 10 and aspartate 105 each contribute to the Mg(2+) site. Glutamate 106 is a catalytic residue.

This sequence belongs to the DNA polymerase type-Y family. In terms of assembly, monomer. The cofactor is Mg(2+).

The protein resides in the cytoplasm. The catalysed reaction is DNA(n) + a 2'-deoxyribonucleoside 5'-triphosphate = DNA(n+1) + diphosphate. Poorly processive, error-prone DNA polymerase involved in untargeted mutagenesis. Copies undamaged DNA at stalled replication forks, which arise in vivo from mismatched or misaligned primer ends. These misaligned primers can be extended by PolIV. Exhibits no 3'-5' exonuclease (proofreading) activity. May be involved in translesional synthesis, in conjunction with the beta clamp from PolIII. The polypeptide is DNA polymerase IV (Exiguobacterium sibiricum (strain DSM 17290 / CCUG 55495 / CIP 109462 / JCM 13490 / 255-15)).